A 1003-amino-acid chain; its full sequence is Translation initiation factor IF-2 (1003 aa).

Basic and acidic residues-rich tracts occupy residues 61–74 (EKFS…DRNK), 139–169 (PVVE…KKPE), 180–206 (LEEK…KETP), 219–229 (VFKIRPTEFKS), and 252–290 (SKEE…DKIS). Disordered regions lie at residues 61 to 81 (EKFS…SIEG) and 135 to 362 (PKAE…KDRF). Residues 315–350 (NAAGTTNAGGASNNNQRNDNANRPNRNNNSKPNGNN) are compositionally biased toward low complexity. Positions 502–672 (PRAPIVTVMG…LLEAEMLDLK (171 aa)) constitute a tr-type G domain. Residues 511-518 (GHVDHGKT) form a G1 region. Position 511 to 518 (511 to 518 (GHVDHGKT)) interacts with GTP. The interval 536 to 540 (GITQH) is G2. Residues 558 to 561 (DTPG) form a G3 region. GTP contacts are provided by residues 558–562 (DTPGH) and 612–615 (NKVD). The G4 stretch occupies residues 612–615 (NKVD). The G5 stretch occupies residues 648-650 (SAK).

The protein belongs to the TRAFAC class translation factor GTPase superfamily. Classic translation factor GTPase family. IF-2 subfamily.

The protein localises to the cytoplasm. One of the essential components for the initiation of protein synthesis. Protects formylmethionyl-tRNA from spontaneous hydrolysis and promotes its binding to the 30S ribosomal subunits. Also involved in the hydrolysis of GTP during the formation of the 70S ribosomal complex. This chain is Translation initiation factor IF-2, found in Phocaeicola vulgatus (strain ATCC 8482 / DSM 1447 / JCM 5826 / CCUG 4940 / NBRC 14291 / NCTC 11154) (Bacteroides vulgatus).